The primary structure comprises 512 residues: NADH-quinone oxidoreductase subunit N (512 aa).

The next 14 membrane-spanning stretches (helical) occupy residues 32 to 52 (VLPALVLATGGVFLICLSVLF), 57 to 77 (FIIVRYVSGLILLLAFAAVFY), 97 to 117 (VLSFWLNLIYISMAIGTAAIV), 126 to 146 (IEFPEFYPLLLFATCGMTLMT), 151 to 171 (FILVFVALELMSICLYILIGM), 186 to 206 (FLLGSFSSGFMLMGIAFLFGG), 231 to 251 (IGLVLFITGVAFKIALFPYHA), 264 to 284 (VTGYMSTAAKAASIGLLLILY), 296 to 316 (WAWLPGILALCSMIYGNLLAL), 324 to 344 (MLAYSSIAHAGYVVAGISAGI), 348 to 368 (VLFYLIVYSFMSLGAFAILAY), 392 to 412 (AIAINIFFMSLAGVPPFGGFW), 431 to 451 (ILLIGGVTNSALALYYYLRIG), and 473 to 493 (VGVTGVVLFCLLMVSVGWFLL).

Belongs to the complex I subunit 2 family. NDH-1 is composed of 14 different subunits. Subunits NuoA, H, J, K, L, M, N constitute the membrane sector of the complex.

The protein localises to the cell inner membrane. The enzyme catalyses a quinone + NADH + 5 H(+)(in) = a quinol + NAD(+) + 4 H(+)(out). Functionally, NDH-1 shuttles electrons from NADH, via FMN and iron-sulfur (Fe-S) centers, to quinones in the respiratory chain. The immediate electron acceptor for the enzyme in this species is believed to be ubiquinone. Couples the redox reaction to proton translocation (for every two electrons transferred, four hydrogen ions are translocated across the cytoplasmic membrane), and thus conserves the redox energy in a proton gradient. The chain is NADH-quinone oxidoreductase subunit N from Leptospira interrogans serogroup Icterohaemorrhagiae serovar Lai (strain 56601).